A 78-amino-acid chain; its full sequence is Acyl carrier protein (78 aa).

One can recognise a Carrier domain in the interval 2–77 (SDILERVRKI…DAVKFITEKT (76 aa)). Ser37 is subject to O-(pantetheine 4'-phosphoryl)serine.

It belongs to the acyl carrier protein (ACP) family. 4'-phosphopantetheine is transferred from CoA to a specific serine of apo-ACP by AcpS. This modification is essential for activity because fatty acids are bound in thioester linkage to the sulfhydryl of the prosthetic group.

The protein resides in the cytoplasm. The protein operates within lipid metabolism; fatty acid biosynthesis. Its function is as follows. Carrier of the growing fatty acid chain in fatty acid biosynthesis. This is Acyl carrier protein from Caulobacter vibrioides (strain ATCC 19089 / CIP 103742 / CB 15) (Caulobacter crescentus).